Here is a 314-residue protein sequence, read N- to C-terminus: Ribosomal RNA small subunit methyltransferase H (314 aa).

Residues alanine 36–histidine 38, aspartate 56, phenylalanine 83, aspartate 104, and glutamine 111 each bind S-adenosyl-L-methionine.

It belongs to the methyltransferase superfamily. RsmH family.

It localises to the cytoplasm. It catalyses the reaction cytidine(1402) in 16S rRNA + S-adenosyl-L-methionine = N(4)-methylcytidine(1402) in 16S rRNA + S-adenosyl-L-homocysteine + H(+). Specifically methylates the N4 position of cytidine in position 1402 (C1402) of 16S rRNA. The sequence is that of Ribosomal RNA small subunit methyltransferase H from Brevibacillus brevis (strain 47 / JCM 6285 / NBRC 100599).